Here is a 93-residue protein sequence, read N- to C-terminus: Small ribosomal subunit protein uS15 (93 aa).

Belongs to the universal ribosomal protein uS15 family. As to quaternary structure, part of the 30S ribosomal subunit. Forms a bridge to the 50S subunit in the 70S ribosome, contacting the 23S rRNA.

Functionally, one of the primary rRNA binding proteins, it binds directly to 16S rRNA where it helps nucleate assembly of the platform of the 30S subunit by binding and bridging several RNA helices of the 16S rRNA. In terms of biological role, forms an intersubunit bridge (bridge B4) with the 23S rRNA of the 50S subunit in the ribosome. The polypeptide is Small ribosomal subunit protein uS15 (Anaplasma marginale (strain Florida)).